The primary structure comprises 688 residues: Glycine--tRNA ligase beta subunit (688 aa).

The protein belongs to the class-II aminoacyl-tRNA synthetase family. In terms of assembly, tetramer of two alpha and two beta subunits.

Its subcellular location is the cytoplasm. The catalysed reaction is tRNA(Gly) + glycine + ATP = glycyl-tRNA(Gly) + AMP + diphosphate. The chain is Glycine--tRNA ligase beta subunit from Shewanella sp. (strain MR-4).